Reading from the N-terminus, the 323-residue chain is Glyoxylate/hydroxypyruvate reductase B (323 aa).

The tract at residues 37 to 62 (AEHGGAGARRRHDRLQQHGGSSAAGE) is disordered. Residues arginine 236 and glutamate 265 contribute to the active site. Histidine 284 acts as the Proton donor in catalysis.

Belongs to the D-isomer specific 2-hydroxyacid dehydrogenase family. GhrB subfamily. In terms of assembly, homodimer.

The protein localises to the cytoplasm. The enzyme catalyses glycolate + NADP(+) = glyoxylate + NADPH + H(+). It carries out the reaction (R)-glycerate + NAD(+) = 3-hydroxypyruvate + NADH + H(+). The catalysed reaction is (R)-glycerate + NADP(+) = 3-hydroxypyruvate + NADPH + H(+). Functionally, catalyzes the NADPH-dependent reduction of glyoxylate and hydroxypyruvate into glycolate and glycerate, respectively. The protein is Glyoxylate/hydroxypyruvate reductase B (tkrA) of Enterobacter agglomerans (Erwinia herbicola).